Reading from the N-terminus, the 261-residue chain is Methionine aminopeptidase (261 aa).

His78 is a substrate binding site. A divalent metal cation contacts are provided by Asp96, Asp107, and His170. His177 is a substrate binding site. Residues Glu202 and Glu233 each coordinate a divalent metal cation.

Belongs to the peptidase M24A family. Methionine aminopeptidase type 1 subfamily. Monomer. Co(2+) is required as a cofactor. Zn(2+) serves as cofactor. Requires Mn(2+) as cofactor. The cofactor is Fe(2+).

It carries out the reaction Release of N-terminal amino acids, preferentially methionine, from peptides and arylamides.. Functionally, removes the N-terminal methionine from nascent proteins. The N-terminal methionine is often cleaved when the second residue in the primary sequence is small and uncharged (Met-Ala-, Cys, Gly, Pro, Ser, Thr, or Val). Requires deformylation of the N(alpha)-formylated initiator methionine before it can be hydrolyzed. This Buchnera aphidicola subsp. Schizaphis graminum (strain Sg) protein is Methionine aminopeptidase.